A 392-amino-acid chain; its full sequence is MNLDRYRNIVRETERKYINVNPIQRGGVLTPEARKALLEFGDGYSVCDFCEGLLHEIEKPPIRQFHEDLAEFLGMDVVRITAGARYAKEAVMSALCEEGDVVVADSLAHYTTFVAAEKAGATVREVPNTGHPEYKVKVDEYARVIDEVEDERGDPPALALLTHVDSEYGNLADAEKFVKICRKKGVPALLNCAYTMGRMDLSNLSPKPDFMVGSGHKGMAACAPCGVLAMREEWEEEVLRGSSLRGDVSGREWPHKEVEMLGCTVMGAPIVTMMASFPHVVERVKRWKEEVRKTRWFVKEMERIEGVRQLGERPKRHDLVKFETPGFHEVAEDHPRRGYFLYEELKKRGVIGIQPGQTETIKASVYGLTDEQVEHVVRAFHEIAEEYGLEVS.

Pyridoxal 5'-phosphate is bound by residues 84–85 (AR), asparagine 191, and 214–216 (SGH). Residue lysine 217 is modified to N6-(pyridoxal phosphate)lysine.

Belongs to the SepCysS family. As to quaternary structure, homodimer. Interacts with SepRS. The cofactor is pyridoxal 5'-phosphate.

It carries out the reaction O-phospho-L-seryl-tRNA(Cys) + hydrogen sulfide + H(+) = L-cysteinyl-tRNA(Cys) + phosphate. In terms of biological role, converts O-phospho-L-seryl-tRNA(Cys) (Sep-tRNA(Cys)) to L-cysteinyl-tRNA(Cys) (Cys-tRNA(Cys)). The chain is O-phospho-L-seryl-tRNA:Cys-tRNA synthase from Methanopyrus kandleri (strain AV19 / DSM 6324 / JCM 9639 / NBRC 100938).